The chain runs to 338 residues: Cytoskeleton protein RodZ (338 aa).

The Cytoplasmic portion of the chain corresponds to 1–111 (MNTEATHEEN…LGKSRKKRDG (111 aa)). The HTH cro/C1-type domain occupies 19–71 (LRLAREQLGLSQQVVAERLCLKVSTVRDIEEDKAPADLASTFLRGYIRSYARL). The H-T-H motif DNA-binding region spans 30–49 (QQVVAERLCLKVSTVRDIEE). Residues 112 to 132 (WLMSFTWLVLFVVVGLTGAWW) form a helical; Signal-anchor for type II membrane protein membrane-spanning segment. Topologically, residues 133–338 (WQNHKAQQEE…TLNAEQSVTQ (206 aa)) are periplasmic. Polar residues-rich tracts occupy residues 147 to 180 (ADQSSAELSQNAANSPQSVPLNTDNTADASQDQA) and 189 to 214 (GDTQNTASNNPQPTPVPSSNTASQQP). The segment at 147 to 245 (ADQSSAELSQ…AQSQLPVGQA (99 aa)) is disordered. The segment covering 220 to 239 (SQANTDTAAQQNTTQPAQSQ) has biased composition (low complexity).

This sequence belongs to the RodZ family.

The protein resides in the cell inner membrane. Its function is as follows. Cytoskeletal protein that is involved in cell-shape control through regulation of the length of the long axis. The sequence is that of Cytoskeleton protein RodZ from Cronobacter sakazakii (strain ATCC BAA-894) (Enterobacter sakazakii).